Reading from the N-terminus, the 264-residue chain is H-2 class II histocompatibility antigen, E-B beta chain (264 aa).

A signal peptide spans 1-26 (MVWLPRVPCVAAVILLLTVLSPPMAL). A beta-1 region spans residues 27-121 (VRDSRPWFLE…ISDKFLVRRR (95 aa)). Over 27 to 225 (VRDSRPWFLE…KAQSTSAQNK (199 aa)) the chain is Extracellular. 2 disulfide bridges follow: cysteine 38–cysteine 106 and cysteine 144–cysteine 200. An N-linked (GlcNAc...) asparagine glycan is attached at asparagine 46. The segment at 122–225 (VEPTVTVYPT…KAQSTSAQNK (104 aa)) is beta-2. Residues 124-214 (PTVTVYPTKT…PSLTDPVTVE (91 aa)) enclose the Ig-like C1-type domain. A helical membrane pass occupies residues 226 to 246 (MLSGVGGFVLGLLFLGAGLFI). At 247-264 (YFRNQKGQSGLQPTGLLS) the chain is on the cytoplasmic side.

It belongs to the MHC class II family. In terms of processing, ubiquitinated in immature dendritic cells leading to down-regulation of MHC class II.

It is found in the membrane. This is H-2 class II histocompatibility antigen, E-B beta chain (H2-Eb1) from Mus musculus (Mouse).